The chain runs to 520 residues: Ribonuclease Y 2 (520 aa).

The chain crosses the membrane as a helical span at residues 7–23; sequence VVLLLASIGVGYGLRAK. The KH domain occupies 206 to 269; that stretch reads NHRSFIAENA…AVAMETMEMI (64 aa). One can recognise an HD domain in the interval 332–425; that stretch reads ILEHSIETAK…VEAADAISGA (94 aa).

It belongs to the RNase Y family.

The protein localises to the cell membrane. Its function is as follows. Endoribonuclease that initiates mRNA decay. The protein is Ribonuclease Y 2 of Pediococcus pentosaceus (strain ATCC 25745 / CCUG 21536 / LMG 10740 / 183-1w).